A 490-amino-acid polypeptide reads, in one-letter code: Protein nucleotidyltransferase YdiU (490 aa).

Residues Gly-94, Gly-96, Arg-97, Lys-117, Asp-129, Gly-130, Arg-180, and Arg-187 each contribute to the ATP site. Residue Asp-256 is the Proton acceptor of the active site. Asn-257 and Asp-266 together coordinate Mg(2+). Asp-266 serves as a coordination point for ATP.

The protein belongs to the SELO family. Requires Mg(2+) as cofactor. The cofactor is Mn(2+).

The catalysed reaction is L-seryl-[protein] + ATP = 3-O-(5'-adenylyl)-L-seryl-[protein] + diphosphate. The enzyme catalyses L-threonyl-[protein] + ATP = 3-O-(5'-adenylyl)-L-threonyl-[protein] + diphosphate. It carries out the reaction L-tyrosyl-[protein] + ATP = O-(5'-adenylyl)-L-tyrosyl-[protein] + diphosphate. It catalyses the reaction L-histidyl-[protein] + UTP = N(tele)-(5'-uridylyl)-L-histidyl-[protein] + diphosphate. The catalysed reaction is L-seryl-[protein] + UTP = O-(5'-uridylyl)-L-seryl-[protein] + diphosphate. The enzyme catalyses L-tyrosyl-[protein] + UTP = O-(5'-uridylyl)-L-tyrosyl-[protein] + diphosphate. In terms of biological role, nucleotidyltransferase involved in the post-translational modification of proteins. It can catalyze the addition of adenosine monophosphate (AMP) or uridine monophosphate (UMP) to a protein, resulting in modifications known as AMPylation and UMPylation. The sequence is that of Protein nucleotidyltransferase YdiU from Clostridium perfringens (strain ATCC 13124 / DSM 756 / JCM 1290 / NCIMB 6125 / NCTC 8237 / Type A).